The following is a 444-amino-acid chain: DNA repair protein RadA (444 aa).

The C4-type zinc-finger motif lies at 10-27 (CQECGYKSVKWLGKCPSC). 91–98 (GEPGIGKS) provides a ligand contact to ATP. The short motif at 247–251 (KNRFG) is the RadA KNRFG motif element. The tract at residues 345-444 (DVFVNVAGGM…HIQEAIEVLF (100 aa)) is lon-protease-like.

Belongs to the RecA family. RadA subfamily.

DNA-dependent ATPase involved in processing of recombination intermediates, plays a role in repairing DNA breaks. Stimulates the branch migration of RecA-mediated strand transfer reactions, allowing the 3' invading strand to extend heteroduplex DNA faster. Binds ssDNA in the presence of ADP but not other nucleotides, has ATPase activity that is stimulated by ssDNA and various branched DNA structures, but inhibited by SSB. Does not have RecA's homology-searching function. The protein is DNA repair protein RadA of Aquifex aeolicus (strain VF5).